The following is a 67-amino-acid chain: Retron Se72 cold shock-like protein (67 aa).

The CSD domain occupies 1 to 66 (MENGFVNFYD…KGFKAVAIQK (66 aa)).

Its function is as follows. Probable cold shock-like component of antiviral defense system retron Se72, composed of a non-coding RNA (ncRNA), a reverse transcriptase (RT) and this protein. Expression of retron Se72 confers protection against bacteriophage lambda. At multiplicity of infection (MOI) of 0.02 cultures slow growth when infected with lambda but do not collapse, at MOI 2 cultures enter growth stasis. This is Retron Se72 cold shock-like protein from Salmonella heidelberg (strain 579083-10).